The following is a 199-amino-acid chain: MIEIPTGLPAELVPLSWLLGVWEGSGVVEYAVGDETVRREFGQRISFSHDGLPHLNYSSYAWIEGDDGPVPFVTETGYWRLRRRVTDGDPGPAMLPPTDERPFTTAEEVETLCNADGGFDVEVALVHPGGVSELYVGQVKSARIDLATDAVLRTEGAKSYTGATRLYGFVERDLLWAWDIAALGQPLRTHASGRVSHVD.

The GXWXGXG signature appears at 20 to 26; sequence GVWEGSG. Residues K158 and H190 each contribute to the heme b site.

This sequence belongs to the nitrobindin family. Homodimer. Heme b serves as cofactor.

The enzyme catalyses peroxynitrite = nitrate. It participates in nitrogen metabolism. Heme-binding protein able to scavenge peroxynitrite and to protect free L-tyrosine against peroxynitrite-mediated nitration, by acting as a peroxynitrite isomerase that converts peroxynitrite to nitrate. Therefore, this protein likely plays a role in peroxynitrite sensing and in the detoxification of reactive nitrogen and oxygen species (RNS and ROS, respectively). Is able to bind nitric oxide (NO) in vitro, but may act as a sensor of peroxynitrite levels in vivo. The chain is Peroxynitrite isomerase from Clavibacter sepedonicus (Clavibacter michiganensis subsp. sepedonicus).